A 322-amino-acid polypeptide reads, in one-letter code: Cysteine protease YopT (322 aa).

The interval 43-72 (SHSNRQKKLSATIKHNQSSRSMLDRKLTSD) is disordered. Residues Cys139, His258, and Asp274 contribute to the active site.

This sequence belongs to the peptidase C58 family. Interacts with human ARHA.

The protein resides in the secreted. Its function is as follows. Cysteine protease, which is translocated into infected cells and plays a central role in pathogenesis by cleaving the C-terminus end of the human small GTPase RhoA/ARHA, a regulator of cytoskeleton. Once cleaved, ARHA loses its lipid modification, and is released from the cell membrane, leading to the subsequent disruption of actin cytoskeleton of the host cell. In Yersinia enterocolitica, this protein is Cysteine protease YopT (yopT).